Here is a 378-residue protein sequence, read N- to C-terminus: Pre-B-cell leukemia transcription factor 4 (378 aa).

Residues methionine 1–arginine 15 are compositionally biased toward pro residues. 2 disordered regions span residues methionine 1 to glycine 24 and valine 100 to asparagine 125. In terms of domain architecture, PBC spans proline 22–aspartate 214. Positions aspartate 29–glycine 107 are PBC-A. Residues glycine 109 to glycine 120 are compositionally biased toward low complexity. The PBC-B stretch occupies residues alanine 110–aspartate 214. Positions alanine 215–threonine 277 form a DNA-binding region, homeobox; TALE-type. 2 disordered regions span residues alanine 291–leucine 320 and arginine 355–asparagine 378. Residues alanine 356–serine 370 show a composition bias toward low complexity.

This sequence belongs to the TALE/PBX homeobox family. Almost exclusively expressed in testis.

It localises to the nucleus. This is Pre-B-cell leukemia transcription factor 4 (Pbx4) from Mus musculus (Mouse).